Reading from the N-terminus, the 228-residue chain is Cytochrome b-c1 complex subunit Rieske, mitochondrial (228 aa).

The transit peptide at Met1–Ser26 directs the protein to the mitochondrion. The Mitochondrial matrix portion of the chain corresponds to Ser27–Asp63. Residues Arg64–Ala93 traverse the membrane as a helical segment. Over Ser94 to Gly228 the chain is Mitochondrial intermembrane. The Rieske domain maps to Ile139 to Ile227. [2Fe-2S] cluster is bound by residues Cys172, His174, Cys191, and His194. Cys177 and Cys193 are joined by a disulfide.

It belongs to the Rieske iron-sulfur protein family. As to quaternary structure, component of the ubiquinol-cytochrome c oxidoreductase (cytochrome b-c1 complex, complex III, CIII), a multisubunit enzyme composed of 3 respiratory subunits cytochrome b, cytochrome c1 and Rieske protein, 2 core protein subunits, and additional low-molecular weight protein subunits. The complex exists as an obligatory dimer and forms supercomplexes (SCs) in the inner mitochondrial membrane with cytochrome c oxidase (complex IV, CIV). Requires [2Fe-2S] cluster as cofactor.

It localises to the mitochondrion inner membrane. The enzyme catalyses a quinol + 2 Fe(III)-[cytochrome c](out) = a quinone + 2 Fe(II)-[cytochrome c](out) + 2 H(+)(out). In terms of biological role, component of the ubiquinol-cytochrome c oxidoreductase, a multisubunit transmembrane complex that is part of the mitochondrial electron transport chain which drives oxidative phosphorylation. The respiratory chain contains 3 multisubunit complexes succinate dehydrogenase (complex II, CII), ubiquinol-cytochrome c oxidoreductase (cytochrome b-c1 complex, complex III, CIII) and cytochrome c oxidase (complex IV, CIV), that cooperate to transfer electrons derived from NADH and succinate to molecular oxygen, creating an electrochemical gradient over the inner membrane that drives transmembrane transport and the ATP synthase. The cytochrome b-c1 complex catalyzes electron transfer from ubiquinol to cytochrome c, linking this redox reaction to translocation of protons across the mitochondrial inner membrane, with protons being carried across the membrane as hydrogens on the quinol. In the process called Q cycle, 2 protons are consumed from the matrix, 4 protons are released into the intermembrane space and 2 electrons are passed to cytochrome c. The Rieske protein is a catalytic core subunit containing a [2Fe-2S] iron-sulfur cluster. It cycles between 2 conformational states during catalysis to transfer electrons from the quinol bound in the Q(0) site in cytochrome b to cytochrome c1. The sequence is that of Cytochrome b-c1 complex subunit Rieske, mitochondrial (rip1) from Schizosaccharomyces pombe (strain 972 / ATCC 24843) (Fission yeast).